The chain runs to 180 residues: Nucleoside triphosphate/diphosphate phosphatase (180 aa).

R26 functions as the Proton donor in the catalytic mechanism. N90, D106, D108, D110, D123, and E126 together coordinate Mg(2+).

It belongs to the Ntdp family. It depends on Mg(2+) as a cofactor.

It catalyses the reaction a ribonucleoside 5'-triphosphate + H2O = a ribonucleoside 5'-diphosphate + phosphate + H(+). The catalysed reaction is a ribonucleoside 5'-diphosphate + H2O = a ribonucleoside 5'-phosphate + phosphate + H(+). Its function is as follows. Has nucleoside phosphatase activity towards nucleoside triphosphates and nucleoside diphosphates. This is Nucleoside triphosphate/diphosphate phosphatase from Staphylococcus saprophyticus subsp. saprophyticus (strain ATCC 15305 / DSM 20229 / NCIMB 8711 / NCTC 7292 / S-41).